We begin with the raw amino-acid sequence, 199 residues long: Recombination protein RecR (199 aa).

A C4-type zinc finger spans residues 57–72; sequence CQSCRTFTEETYCPIC. The 96-residue stretch at 81–176 folds into the Toprim domain; that stretch reads DIICVVETPA…MVSRIAHGVP (96 aa).

It belongs to the RecR family.

In terms of biological role, may play a role in DNA repair. It seems to be involved in an RecBC-independent recombinational process of DNA repair. It may act with RecF and RecO. The chain is Recombination protein RecR from Shewanella halifaxensis (strain HAW-EB4).